The sequence spans 193 residues: Pyridoxal 5'-phosphate synthase subunit PdxT (193 aa).

50 to 52 (GES) contributes to the L-glutamine binding site. Cys-82 acts as the Nucleophile in catalysis. Residues Arg-109 and 136–137 (IR) each bind L-glutamine. Catalysis depends on charge relay system residues His-172 and Glu-174.

This sequence belongs to the glutaminase PdxT/SNO family. In terms of assembly, in the presence of PdxS, forms a dodecamer of heterodimers. Only shows activity in the heterodimer.

It carries out the reaction aldehydo-D-ribose 5-phosphate + D-glyceraldehyde 3-phosphate + L-glutamine = pyridoxal 5'-phosphate + L-glutamate + phosphate + 3 H2O + H(+). The enzyme catalyses L-glutamine + H2O = L-glutamate + NH4(+). It functions in the pathway cofactor biosynthesis; pyridoxal 5'-phosphate biosynthesis. In terms of biological role, catalyzes the hydrolysis of glutamine to glutamate and ammonia as part of the biosynthesis of pyridoxal 5'-phosphate. The resulting ammonia molecule is channeled to the active site of PdxS. The protein is Pyridoxal 5'-phosphate synthase subunit PdxT of Streptococcus pneumoniae serotype 2 (strain D39 / NCTC 7466).